Reading from the N-terminus, the 312-residue chain is Glyoxylate/hydroxypyruvate reductase A (312 aa).

Arginine 227 is an active-site residue. Histidine 275 acts as the Proton donor in catalysis.

Belongs to the D-isomer specific 2-hydroxyacid dehydrogenase family. GhrA subfamily.

Its subcellular location is the cytoplasm. It carries out the reaction glycolate + NADP(+) = glyoxylate + NADPH + H(+). The catalysed reaction is (R)-glycerate + NAD(+) = 3-hydroxypyruvate + NADH + H(+). It catalyses the reaction (R)-glycerate + NADP(+) = 3-hydroxypyruvate + NADPH + H(+). Functionally, catalyzes the NADPH-dependent reduction of glyoxylate and hydroxypyruvate into glycolate and glycerate, respectively. The chain is Glyoxylate/hydroxypyruvate reductase A from Escherichia coli O81 (strain ED1a).